A 276-amino-acid polypeptide reads, in one-letter code: SF-assemblin (276 aa).

The interval 1-31 is nonhelical region; sequence MSLRPFETPGGLSSLSPRRRDFSPTRPGTNG. The disordered stretch occupies residues 1–37; the sequence is MSLRPFETPGGLSSLSPRRRDFSPTRPGTNGPSAKLE. The tract at residues 32–276 is rod; the sequence is PSAKLEHVTE…LQEGLKLVSA (245 aa). Residues 67-145 adopt a coiled-coil conformation; it reads LLQESLQRIE…LVRDERESRR (79 aa).

Belongs to the SF-assemblin family.

The protein resides in the cytoplasm. It is found in the cytoskeleton. Major component of the striated microtubule-associated fibers (SMAFs; system-I-fibers). In Chlamydomonas reinhardtii (Chlamydomonas smithii), this protein is SF-assemblin.